A 433-amino-acid chain; its full sequence is Acetyl-CoA acetyltransferase erg10A, mitochondrial (433 aa).

Residues 1–34 (MAIQTTTGLAARLVAKRATFPASRRNFSASRSAL) constitute a mitochondrion transit peptide. Cys124 functions as the Acyl-thioester intermediate in the catalytic mechanism. Residue Tyr219 coordinates K(+). Positions 229 and 262 each coordinate CoA. Ala280 contributes to the K(+) binding site. A CoA-binding site is contributed by Ser284. Active-site proton acceptor residues include His387 and Cys415. Asn416 is a binding site for chloride.

Belongs to the thiolase-like superfamily. Thiolase family. As to quaternary structure, homotetramer. The cofactor is K(+).

It is found in the mitochondrion. It carries out the reaction 2 acetyl-CoA = acetoacetyl-CoA + CoA. Its pathway is metabolic intermediate biosynthesis; (R)-mevalonate biosynthesis; (R)-mevalonate from acetyl-CoA: step 1/3. Mitochondrial acetyl-CoA acetyltransferase that catalyzes both the formation and degradation of acetoacetyl-CoA. Has no overlapping function with erg10B and seems not to be involved in ergosterol biosynthesis. Plays an important role in growth, morphogenesis and maintaining mitochondrial function including the response to oxidative stresses. This Aspergillus fumigatus (strain ATCC MYA-4609 / CBS 101355 / FGSC A1100 / Af293) (Neosartorya fumigata) protein is Acetyl-CoA acetyltransferase erg10A, mitochondrial.